Reading from the N-terminus, the 238-residue chain is MRPSKRAADEMRAISFERGVSKHAEGSCLVKFGDTHVLCTASLEEKVPGWMRNTGKGWVTAEYGMLPRSTGERMRREAAAGKQGGRTQEIQRLIGRSLRAVVDMQALGEMQITVDCDVIQADGGTRTAAITGGWVALHECLRWMEARQMVRVEKVLKDHVAAISCGIYEGVPVLDLDYAEDSVAETDSNFVMTGKGGIVEIQGTAEGVPFSEEEFGALMKLARSGIDRLVSLQKMAVA.

Residues Arg-86 and 124 to 126 each bind phosphate; that span reads GTR.

The protein belongs to the RNase PH family. Homohexameric ring arranged as a trimer of dimers.

It catalyses the reaction tRNA(n+1) + phosphate = tRNA(n) + a ribonucleoside 5'-diphosphate. Phosphorolytic 3'-5' exoribonuclease that plays an important role in tRNA 3'-end maturation. Removes nucleotide residues following the 3'-CCA terminus of tRNAs; can also add nucleotides to the ends of RNA molecules by using nucleoside diphosphates as substrates, but this may not be physiologically important. Probably plays a role in initiation of 16S rRNA degradation (leading to ribosome degradation) during starvation. The protein is Ribonuclease PH of Brucella abortus (strain S19).